Here is a 258-residue protein sequence, read N- to C-terminus: NH(3)-dependent NAD(+) synthetase (258 aa).

34–41 (GLSGGIDS) is an ATP binding site. Asp-40 is a binding site for Mg(2+). Arg-116 contributes to the deamido-NAD(+) binding site. Position 136 (Thr-136) interacts with ATP. Glu-141 provides a ligand contact to Mg(2+). The ATP site is built by Lys-165 and Ser-187.

Belongs to the NAD synthetase family. In terms of assembly, homodimer.

It carries out the reaction deamido-NAD(+) + NH4(+) + ATP = AMP + diphosphate + NAD(+) + H(+). Its pathway is cofactor biosynthesis; NAD(+) biosynthesis; NAD(+) from deamido-NAD(+) (ammonia route): step 1/1. In terms of biological role, catalyzes the ATP-dependent amidation of deamido-NAD to form NAD. Uses ammonia as a nitrogen source. The protein is NH(3)-dependent NAD(+) synthetase of Fusobacterium nucleatum subsp. nucleatum (strain ATCC 25586 / DSM 15643 / BCRC 10681 / CIP 101130 / JCM 8532 / KCTC 2640 / LMG 13131 / VPI 4355).